The primary structure comprises 261 residues: Carbonic anhydrase 1 (261 aa).

Ala-2 is subject to N-acetylalanine. The 258-residue stretch at 4–261 (ADWGYGSENG…LKGRTVRASF (258 aa)) folds into the Alpha-carbonic anhydrase domain. His-65 acts as the Proton donor/acceptor in catalysis. The Zn(2+) site is built by His-95, His-97, and His-120. Residues Thr-200 and 200–201 (TH) each bind substrate. The tract at residues 239–261 (AVPVLSNHRPPQPLKGRTVRASF) is disordered.

Belongs to the alpha-carbonic anhydrase family. It depends on Zn(2+) as a cofactor.

It localises to the cytoplasm. The catalysed reaction is hydrogencarbonate + H(+) = CO2 + H2O. It carries out the reaction urea = cyanamide + H2O. With respect to regulation, inhibited by acetazolamide. Its function is as follows. Catalyzes the reversible hydration of carbon dioxide. Can hydrate cyanamide to urea. The chain is Carbonic anhydrase 1 (Ca1) from Mus musculus (Mouse).